The sequence spans 274 residues: Phosphatidylglycerol--prolipoprotein diacylglyceryl transferase (274 aa).

Helical transmembrane passes span 24–44 (WYAL…RFLS), 60–80 (LLVW…VVFY), 96–116 (WHGG…TVLF), and 122–142 (LSVA…LFFG). An a 1,2-diacyl-sn-glycero-3-phospho-(1'-sn-glycerol)-binding site is contributed by Arg-143. The next 3 helical transmembrane spans lie at 182–202 (ATLE…FTAL), 207–227 (GQII…AEFF), and 241–261 (VTMG…VFVV).

Belongs to the Lgt family.

The protein localises to the cell inner membrane. The enzyme catalyses L-cysteinyl-[prolipoprotein] + a 1,2-diacyl-sn-glycero-3-phospho-(1'-sn-glycerol) = an S-1,2-diacyl-sn-glyceryl-L-cysteinyl-[prolipoprotein] + sn-glycerol 1-phosphate + H(+). It participates in protein modification; lipoprotein biosynthesis (diacylglyceryl transfer). In terms of biological role, catalyzes the transfer of the diacylglyceryl group from phosphatidylglycerol to the sulfhydryl group of the N-terminal cysteine of a prolipoprotein, the first step in the formation of mature lipoproteins. In Rhodospirillum rubrum (strain ATCC 11170 / ATH 1.1.1 / DSM 467 / LMG 4362 / NCIMB 8255 / S1), this protein is Phosphatidylglycerol--prolipoprotein diacylglyceryl transferase.